The following is a 425-amino-acid chain: Histidine--tRNA ligase 1 (425 aa).

This sequence belongs to the class-II aminoacyl-tRNA synthetase family. Homodimer.

Its subcellular location is the cytoplasm. It carries out the reaction tRNA(His) + L-histidine + ATP = L-histidyl-tRNA(His) + AMP + diphosphate + H(+). This Bacillus cereus (strain ZK / E33L) protein is Histidine--tRNA ligase 1.